Here is a 243-residue protein sequence, read N- to C-terminus: MISLLQMKFRALLLLLSKVWTCICFMFNRQVRAFIQYQPVKYELFPLSPVSRHRLSLVQRKTLVLDLDETLIHSHHNAMPRNTVKPGTPHDFTVKVTIDRNPVRFFVHKRPHVDYFLDVVSQWYDLVVFTASMEIYGAAVADKLDNGRNILRRRYYRQHCTPDYGSYTKDLSAICSDLNRIFIIDNSPGAYRCFPNNAIPIKSWFSDPMDTALLSLLPMLDALRFTNDVRSVLSRNLHLHRLW.

The chain crosses the membrane as a helical span at residues 11-27; that stretch reads ALLLLLSKVWTCICFMF. In terms of domain architecture, FCP1 homology spans 56-223; it reads SLVQRKTLVL…LSLLPMLDAL (168 aa).

It belongs to the dullard family.

The protein localises to the membrane. The catalysed reaction is O-phospho-L-seryl-[protein] + H2O = L-seryl-[protein] + phosphate. It carries out the reaction O-phospho-L-threonyl-[protein] + H2O = L-threonyl-[protein] + phosphate. Functionally, serine/threonine protein phosphatase that may dephosphorylate and activate lipin-like phosphatases. Lipins are phosphatidate phosphatases that catalyze the conversion of phosphatidic acid to diacylglycerol and control the metabolism of fatty acids at different levels. May indirectly modulate the lipid composition of nuclear and/or endoplasmic reticulum membranes and be required for proper nuclear membrane morphology and/or dynamics. May also indirectly regulate the production of lipid droplets and triacylglycerol. In Drosophila melanogaster (Fruit fly), this protein is CTD nuclear envelope phosphatase 1 homolog (Dd).